The sequence spans 187 residues: Photosystem I assembly protein Ycf4 (187 aa).

Transmembrane regions (helical) follow at residues 23–43 (INYF…IVGI) and 70–90 (FYGI…ILGV).

The protein belongs to the Ycf4 family.

Its subcellular location is the plastid. It is found in the chloroplast thylakoid membrane. In terms of biological role, seems to be required for the assembly of the photosystem I complex. In Chara vulgaris (Common stonewort), this protein is Photosystem I assembly protein Ycf4.